Consider the following 74-residue polypeptide: DNA-directed RNA polymerase subunit omega (74 aa).

The protein belongs to the RNA polymerase subunit omega family. The RNAP catalytic core consists of 2 alpha, 1 beta/beta' and 1 omega subunit. When a sigma factor is associated with the core the holoenzyme is formed, which can initiate transcription.

The enzyme catalyses RNA(n) + a ribonucleoside 5'-triphosphate = RNA(n+1) + diphosphate. Its function is as follows. Promotes RNA polymerase assembly. Latches the N- and C-terminal regions of the beta' subunit thereby facilitating its interaction with the beta and alpha subunits. The polypeptide is DNA-directed RNA polymerase subunit omega (Helicobacter hepaticus (strain ATCC 51449 / 3B1)).